The following is a 366-amino-acid chain: Isocitrate dehydrogenase [NAD] subunit alpha, mitochondrial (366 aa).

The transit peptide at 1–27 directs the protein to the mitochondrion; the sequence is MAGPAWISKVSRLLGAFHNPKQVTRGF. Lysine 77 carries the post-translational modification N6-succinyllysine. Threonine 101 carries the phosphothreonine modification. Substrate is bound by residues arginine 115, arginine 125, and arginine 146. Lysine 223 is modified (N6-acetyllysine). Positions 233, 257, and 261 each coordinate Mg(2+). Lysine 343 carries the post-translational modification N6-acetyllysine; alternate. Position 343 is an N6-succinyllysine; alternate (lysine 343). Position 350 is an N6-succinyllysine (lysine 350).

Belongs to the isocitrate and isopropylmalate dehydrogenases family. In terms of assembly, heterooligomer of subunits alpha (IDH3A), beta (IDH3B), and gamma (IDH3G) in the apparent ratio of 2:1:1. The heterodimer containing one IDH3A and one IDH3B subunit and the heterodimer containing one IDH3A and one IDH3G subunit assemble into a heterotetramer (which contains two subunits of IDH3A, one of IDH3B and one of IDH3G) and further into the heterooctamer. It depends on Mg(2+) as a cofactor. Mn(2+) serves as cofactor.

Its subcellular location is the mitochondrion. It catalyses the reaction D-threo-isocitrate + NAD(+) = 2-oxoglutarate + CO2 + NADH. The heterotetramer and the heterodimer composed of IDH3A and IDH3G subunits can be allosterically activated by citrate (CIT) or/and ADP, and the two activators can act independently or synergistically. The heterodimer composed of IDH3A and IDH3B subunits cannot be allosterically regulated and the allosteric regulation of the heterotetramer is through the IDH3G subunit and not the IDH3B subunit. The IDH3G subunit contains the allosteric site which consists of a CIT-binding site and an ADP-binding site, and the binding of CIT and ADP causes conformational changes at the allosteric site which are transmitted to the active site in the catalytic subunit (IDH3A) through a cascade of conformational changes at the heterodimer interface, leading to stabilization of the isocitrate-binding at the active site and thus activation of the enzyme. ATP can activate the heterotetramer and the heterodimer composed of IDH3A and IDH3G subunits at low concentrations but inhibits their activities at high concentrations, whereas ATP exhibits only inhibitory effect on the heterodimer composed of IDH3A and IDH3B subunits. In terms of biological role, catalytic subunit of the enzyme which catalyzes the decarboxylation of isocitrate (ICT) into alpha-ketoglutarate. The heterodimer composed of the alpha (IDH3A) and beta (IDH3B) subunits and the heterodimer composed of the alpha (IDH3A) and gamma (IDH3G) subunits, have considerable basal activity but the full activity of the heterotetramer (containing two subunits of IDH3A, one of IDH3B and one of IDH3G) requires the assembly and cooperative function of both heterodimers. The protein is Isocitrate dehydrogenase [NAD] subunit alpha, mitochondrial of Pongo abelii (Sumatran orangutan).